Here is a 104-residue protein sequence, read N- to C-terminus: Pyrimidine/purine nucleoside phosphorylase (104 aa).

It belongs to the nucleoside phosphorylase PpnP family.

The enzyme catalyses a purine D-ribonucleoside + phosphate = a purine nucleobase + alpha-D-ribose 1-phosphate. The catalysed reaction is adenosine + phosphate = alpha-D-ribose 1-phosphate + adenine. It carries out the reaction cytidine + phosphate = cytosine + alpha-D-ribose 1-phosphate. It catalyses the reaction guanosine + phosphate = alpha-D-ribose 1-phosphate + guanine. The enzyme catalyses inosine + phosphate = alpha-D-ribose 1-phosphate + hypoxanthine. The catalysed reaction is thymidine + phosphate = 2-deoxy-alpha-D-ribose 1-phosphate + thymine. It carries out the reaction uridine + phosphate = alpha-D-ribose 1-phosphate + uracil. It catalyses the reaction xanthosine + phosphate = alpha-D-ribose 1-phosphate + xanthine. Its function is as follows. Catalyzes the phosphorolysis of diverse nucleosides, yielding D-ribose 1-phosphate and the respective free bases. Can use uridine, adenosine, guanosine, cytidine, thymidine, inosine and xanthosine as substrates. Also catalyzes the reverse reactions. In Syntrophotalea carbinolica (strain DSM 2380 / NBRC 103641 / GraBd1) (Pelobacter carbinolicus), this protein is Pyrimidine/purine nucleoside phosphorylase.